The primary structure comprises 209 residues: MIGLVGRKVGMTRIFNEDGVSIPVTVIEIEANRVTQVKTVETDGYSAIQVTTGSKKASRVTKPEAGHFVKAGVEAGRGLWEFRTTEGEEFTLGQEINVDIFADVKKVDVTGTSKGKGFAGGVKRWNFRTQDATHGNSLSHRVLGSIGQNQTPGRVFKGKKMAGHLGNERVTVQSLEVVRVDAERKLLLVKGAVPGATNGDVIVKPAVKA.

An N5-methylglutamine modification is found at Q150.

It belongs to the universal ribosomal protein uL3 family. As to quaternary structure, part of the 50S ribosomal subunit. Forms a cluster with proteins L14 and L19. In terms of processing, methylated by PrmB.

Functionally, one of the primary rRNA binding proteins, it binds directly near the 3'-end of the 23S rRNA, where it nucleates assembly of the 50S subunit. In Pasteurella multocida (strain Pm70), this protein is Large ribosomal subunit protein uL3.